A 418-amino-acid polypeptide reads, in one-letter code: Alpha-1-antitrypsin (418 aa).

The first 24 residues, Met-1–Ala-24, serve as a signal peptide directing secretion. At Ser-38 the chain carries Phosphoserine. N-linked (GlcNAc...) asparagine glycosylation is found at Asn-70, Asn-107, and Asn-271. The interval Gly-373–Lys-392 is RCL. Ser-383 is subject to Phosphoserine.

Belongs to the serpin family. As to quaternary structure, interacts with CELA2A. Interacts with ERGIC3 and LMAN1/ERGIC53. Interacts with PRSS1/Trypsin. In terms of tissue distribution, plasma.

It localises to the secreted. Functionally, inhibitor of serine proteases. Its primary target is elastase, but it also has a moderate affinity for plasmin and thrombin. Inhibits trypsin, chymotrypsin and plasminogen activator. This Pongo abelii (Sumatran orangutan) protein is Alpha-1-antitrypsin (SERPINA1).